An 88-amino-acid chain; its full sequence is Small ribosomal subunit protein uS15 (88 aa).

The protein belongs to the universal ribosomal protein uS15 family. In terms of assembly, part of the 30S ribosomal subunit. Forms a bridge to the 50S subunit in the 70S ribosome, contacting the 23S rRNA.

In terms of biological role, one of the primary rRNA binding proteins, it binds directly to 16S rRNA where it helps nucleate assembly of the platform of the 30S subunit by binding and bridging several RNA helices of the 16S rRNA. Functionally, forms an intersubunit bridge (bridge B4) with the 23S rRNA of the 50S subunit in the ribosome. This chain is Small ribosomal subunit protein uS15, found in Polaromonas naphthalenivorans (strain CJ2).